The sequence spans 305 residues: MPDVGIIYNDSKPRACTIAEELQQQLQDRGWGVRLATSQSGLLGYSNPDTVICHTPVESLVPRGFDASLRWAIVLGGDGTVLAAARQLAPIGVPMLTVNTGHLGFLAEAYLDSLPAAIEQLCKGEYSIEERTMMEVKVLRRELIRWEALSLNEMALHREPLTSMCHFEVAIGKHVPVDIAADGVIVSTPTGSTAYSLSSGGPVVTPDVPVFQLVPICPHSLASRALVFANREPMTIFPATPERLMMVVDGNAGCYVWPEDRVLIQRSRYPAQFIRLQPNEFFRVLREKLGWGLPHVAKPSAPDQS.

The active-site Proton acceptor is the Asp78. NAD(+) is bound by residues 78–79 (DG), 152–153 (NE), Asp182, 193–198 (TAYSLS), and Asn251.

The protein belongs to the NAD kinase family. The cofactor is a divalent metal cation.

It is found in the cytoplasm. The catalysed reaction is NAD(+) + ATP = ADP + NADP(+) + H(+). Involved in the regulation of the intracellular balance of NAD and NADP, and is a key enzyme in the biosynthesis of NADP. Catalyzes specifically the phosphorylation on 2'-hydroxyl of the adenosine moiety of NAD to yield NADP. This is NAD kinase 2 from Synechococcus sp. (strain ATCC 27144 / PCC 6301 / SAUG 1402/1) (Anacystis nidulans).